A 372-amino-acid polypeptide reads, in one-letter code: Cyclin-dependent kinase 9 (372 aa).

The Protein kinase domain occupies 19 to 315 (YEKLAKIGQG…SDDALNHDFF (297 aa)). ATP is bound at residue 25 to 33 (IGQGTFGEV). Phosphoserine is present on K35. K44 carries the N6-acetyllysine; by EP300/CBP, PCAF/KAT2B and GCN5/KAT2A modification. K48 lines the ATP pocket. An N6-acetyllysine; by PCAF/KAT2B and GCN5/KAT2A modification is found at K48. Position 54 is a phosphothreonine (N54). 104-106 (DFC) is an ATP binding site. Catalysis depends on D149, which acts as the Proton acceptor. Residues 166–191 (ADFGLARAFSLAKNSQPNRYTNRVVT) form a T-loop region. Residue D167 coordinates ATP. Phosphoserine is present on S175. T186 carries the phosphothreonine; by CaMK1D modification. Positions 343–372 (RRKGSQITQQSTNQSRNPATTNQTEFERVF) are disordered. Phosphoserine; by CDK9 and PKA is present on S347. The segment covering 347–366 (SQITQQSTNQSRNPATTNQT) has biased composition (polar residues). The residue at position 350 (T350) is a Phosphothreonine; by CDK9. A Phosphoserine; by CDK9 modification is found at S353. Phosphothreonine; by CDK9 is present on T354. A Phosphoserine; by CDK9 modification is found at S357. Phosphothreonine; by CDK9 is present on residues T362 and T363.

Belongs to the protein kinase superfamily. CMGC Ser/Thr protein kinase family. CDC2/CDKX subfamily. Component of the super elongation complex (SEC), at least composed of EAF1, EAF2, CDK9, MLLT3/AF9, AFF (AFF1 or AFF4), the P-TEFb complex and ELL (ELL, ELL2 or ELL3). Associates with CCNT1/cyclin-T1, CCNT2/cyclin-T2 (isoform A and isoform B) or CCNK/cyclin-K to form active P-TEFb. P-TEFb forms a complex with AFF4/AF5Q31 and is part of the super elongation complex (SEC). Component of a complex which is composed of at least 5 members: HTATSF1/Tat-SF1, P-TEFb complex, RNA pol II, SUPT5H and NCL/nucleolin. Associates with UBR5 and forms a transcription regulatory complex composed of CDK9, RNAP II, UBR5 and TFIIS/TCEA1 that can stimulate target gene transcription (e.g. gamma fibrinogen/FGG) by recruiting their promoters. Component of the 7SK snRNP inactive complex which is composed of at least 8 members: P-TEFb (composed of CDK9 and CCNT1/cyclin-T1), HEXIM1, HEXIM2, LARP7, BCDIN3, SART3 proteins and 7SK and U6 snRNAs. This inactive 7SK snRNP complex can also interact with NCOR1 and HDAC3, probably to regulate CDK9 acetylation. Release of P-TEFb from P-TEFb/7SK snRNP complex requires both PP2B to transduce calcium Ca(2+) signaling in response to stimuli (e.g. UV or hexamethylene bisacetamide (HMBA)) and PPP1CA to dephosphorylate Thr-186. This released P-TEFb remains inactive in the pre-initiation complex with BRD4 until new Thr-186 phosphorylation occurs after the synthesis of a short RNA. Interacts with BRD4; to target chromatin binding. Interacts with JMJD6. Interacts with activated nuclear STAT3 and RELA/p65. Binds to AR and MYOD1. Forms a complex composed of CDK9, CCNT1/cyclin-T1, EP300 and GATA4 that stimulates hypertrophy in cardiomyocytes. The large PER complex involved in the repression of transcriptional termination is composed of at least PER2, CDK9, DDX5, DHX9, NCBP1 and POLR2A. Interacts with HSF1. Interacts with TBX21. Isoform 3: binds to KU70/XRCC6. Interacts with WDR43. Interacts with ZMYND8; the association appears to occur between homodimeric ZMYND8 and the activated form of the P-TEFb complex. In terms of assembly, (Microbial infection) Interacts with the acidic/proline-rich region of HIV-1 and HIV-2 Tat via T-loop region and is thus required for HIV to hijack host transcription machinery during its replication through cooperative binding to viral TAR RNA. As to quaternary structure, (Microbial infection) Interacts with human herpes virus 1 (HHV-1) protein ICP22; this interaction blocks the recruitment of positive transcription elongation factor b (P-TEFb) to the viral promoter. Post-translationally, autophosphorylation at Thr-186, Ser-347, Thr-350, Ser-353, Thr-354 and Ser-357 triggers kinase activity by promoting cyclin and substrate binding (e.g. HIV TAT) upon conformational changes. Thr-186 phosphorylation requires the calcium Ca(2+) signaling pathway, including CaMK1D and calmodulin. This inhibition is relieved by Thr-29 dephosphorylation. However, phosphorylation at Thr-29 is inhibitory within the HIV transcription initiation complex. Phosphorylation at Ser-175 inhibits kinase activity. Can be phosphorylated on either Thr-362 or Thr-363 but not on both simultaneously. In terms of processing, dephosphorylation of Thr-186 by PPM1A and PPM1B blocks CDK9 activity and may lead to CDK9 proteasomal degradation. However, PPP1CA-mediated Thr-186 dephosphorylation is required to release P-TEFb from its inactive P-TEFb/7SK snRNP complex. Dephosphorylated at Ser-347 by the PNUTS-PP1 complex during RNA polymerase II transcription pause-release. Dephosphorylation of C-terminus Thr and Ser residues by protein phosphatase-1 (PP1) triggers CDK9 activity, contributing to the activation of HIV-1 transcription. N6-acetylation of Lys-44 promotes kinase activity, whereas acetylation of both Lys-44 and Lys-48 mediated by PCAF/KAT2B and GCN5/KAT2A reduces kinase activity. The acetylated form associates with PML bodies in the nuclear matrix and with the transcriptionally silent HIV-1 genome; deacetylated upon transcription stimulation. Deacetylated by SIRT7, promoting the kinase activity and subsequent 'Ser-2' phosphorylation of the C-terminal domain (CTD) of RNA polymerase II. Post-translationally, polyubiquitinated and thus activated by UBR5. This ubiquitination is promoted by TFIIS/TCEA1 and favors 'Ser-2' phosphorylation of RPB1/POLR2A CTD. In terms of tissue distribution, ubiquitous.

Its subcellular location is the nucleus. It is found in the cytoplasm. It localises to the PML body. The catalysed reaction is L-seryl-[protein] + ATP = O-phospho-L-seryl-[protein] + ADP + H(+). It carries out the reaction L-threonyl-[protein] + ATP = O-phospho-L-threonyl-[protein] + ADP + H(+). It catalyses the reaction [DNA-directed RNA polymerase] + ATP = phospho-[DNA-directed RNA polymerase] + ADP + H(+). Inhibited by CDKI-71, CR8, GPC-286199, AG-024322, flavopiridol (alvocidib), RBG-286147, anilinopyrimidine 32, arylazopyrazole 31b, indirubin 3'-monoxime, meriolin 3,P276-00, olomoucine II, pyrazolotriazine, meriolin, variolin, thiazolyl-pyrimidine, thiazolyl-pyrimidine, indirubin-30-monoxime, ZK 304709, AG-012986, AT7519, R547, RGB-286638, imidazole pyrimidine, EXEL-3700, EXEL-8647, 5,6-dichloro-1-b-ribofur-anosyl-benzimidazole (DRB), P276-00, roscovitine (seliciclib, CYC202) and SNS-032 (BMS-387032). Activation by Thr-186 phosphorylation is calcium Ca(2+) signaling pathway-dependent; actively inactivated by dephosphorylation mediated by PPP1CA, PPM1A and PPM1B. Reversibly repressed by acetylation at Lys-44 and Lys-48. In terms of biological role, protein kinase involved in the regulation of transcription. Member of the cyclin-dependent kinase pair (CDK9/cyclin-T) complex, also called positive transcription elongation factor b (P-TEFb), which facilitates the transition from abortive to productive elongation by phosphorylating the CTD (C-terminal domain) of the large subunit of RNA polymerase II (RNAP II) POLR2A, SUPT5H and RDBP. This complex is inactive when in the 7SK snRNP complex form. Phosphorylates EP300, MYOD1, RPB1/POLR2A and AR and the negative elongation factors DSIF and NELFE. Regulates cytokine inducible transcription networks by facilitating promoter recognition of target transcription factors (e.g. TNF-inducible RELA/p65 activation and IL-6-inducible STAT3 signaling). Promotes RNA synthesis in genetic programs for cell growth, differentiation and viral pathogenesis. P-TEFb is also involved in cotranscriptional histone modification, mRNA processing and mRNA export. Modulates a complex network of chromatin modifications including histone H2B monoubiquitination (H2Bub1), H3 lysine 4 trimethylation (H3K4me3) and H3K36me3; integrates phosphorylation during transcription with chromatin modifications to control co-transcriptional histone mRNA processing. The CDK9/cyclin-K complex has also a kinase activity towards CTD of RNAP II and can substitute for CDK9/cyclin-T P-TEFb in vitro. Replication stress response protein; the CDK9/cyclin-K complex is required for genome integrity maintenance, by promoting cell cycle recovery from replication arrest and limiting single-stranded DNA amount in response to replication stress, thus reducing the breakdown of stalled replication forks and avoiding DNA damage. In addition, probable function in DNA repair of isoform 2 via interaction with KU70/XRCC6. Promotes cardiac myocyte enlargement. RPB1/POLR2A phosphorylation on 'Ser-2' in CTD activates transcription. AR phosphorylation modulates AR transcription factor promoter selectivity and cell growth. DSIF and NELF phosphorylation promotes transcription by inhibiting their negative effect. The phosphorylation of MYOD1 enhances its transcriptional activity and thus promotes muscle differentiation. Catalyzes phosphorylation of KAT5, promoting KAT5 recruitment to chromatin and histone acetyltransferase activity. This is Cyclin-dependent kinase 9 from Homo sapiens (Human).